The following is a 351-amino-acid chain: Anthranilate phosphoribosyltransferase (351 aa).

5-phospho-alpha-D-ribose 1-diphosphate-binding positions include Gly80, 83-84, Thr88, 90-93, 108-116, and Ser120; these read GD, NIST, and KHGNRSVTS. Gly80 serves as a coordination point for anthranilate. Residue Ser92 coordinates Mg(2+). Asn111 contacts anthranilate. Position 166 (Arg166) interacts with anthranilate. Asp229 and Glu230 together coordinate Mg(2+).

It belongs to the anthranilate phosphoribosyltransferase family. As to quaternary structure, homodimer. It depends on Mg(2+) as a cofactor.

It carries out the reaction N-(5-phospho-beta-D-ribosyl)anthranilate + diphosphate = 5-phospho-alpha-D-ribose 1-diphosphate + anthranilate. Its pathway is amino-acid biosynthesis; L-tryptophan biosynthesis; L-tryptophan from chorismate: step 2/5. In terms of biological role, catalyzes the transfer of the phosphoribosyl group of 5-phosphorylribose-1-pyrophosphate (PRPP) to anthranilate to yield N-(5'-phosphoribosyl)-anthranilate (PRA). The protein is Anthranilate phosphoribosyltransferase of Chlorobium phaeovibrioides (strain DSM 265 / 1930) (Prosthecochloris vibrioformis (strain DSM 265)).